The chain runs to 297 residues: MVEVRVPATSANIGPGFDCLGVAVNIYNKFFVEEIEEGLIFEGCADKFKNENNLIYVAMKKCFDKIGYKPTGLRIKIESDIPVSRGLGSSAACVVGGIVSANELAGGVLNKKELLDLAVGVEGHPDNVNPAFCGGMTASISDNREVIYSKVKVSEGIKFCALIPDFTLSTEKARAVLPKSIDYKDGIFNVGRTALMISALNNGDFHLIKYACKDKLHQDYRAKLIENFYSIKEECEKLNSLGVFLSGAGPTIMVMLKEEDKRFSKNIKSFLETLKNKWEVRELKIDKLGTVVNNRKV.

82–92 is an ATP binding site; the sequence is PVSRGLGSSAA.

It belongs to the GHMP kinase family. Homoserine kinase subfamily.

It localises to the cytoplasm. The catalysed reaction is L-homoserine + ATP = O-phospho-L-homoserine + ADP + H(+). It participates in amino-acid biosynthesis; L-threonine biosynthesis; L-threonine from L-aspartate: step 4/5. In terms of biological role, catalyzes the ATP-dependent phosphorylation of L-homoserine to L-homoserine phosphate. The polypeptide is Homoserine kinase (Clostridium botulinum (strain Kyoto / Type A2)).